Consider the following 145-residue polypeptide: uncharacterized protein (145 aa).

A helical membrane pass occupies residues 97–117 (ISMLLLIVIIAIGLTISYMVI).

It localises to the membrane. This is an uncharacterized protein from Methanocaldococcus jannaschii (strain ATCC 43067 / DSM 2661 / JAL-1 / JCM 10045 / NBRC 100440) (Methanococcus jannaschii).